We begin with the raw amino-acid sequence, 473 residues long: 3-isopropylmalate dehydratase large subunit (473 aa).

Residues Cys354, Cys414, and Cys417 each contribute to the [4Fe-4S] cluster site.

This sequence belongs to the aconitase/IPM isomerase family. LeuC type 1 subfamily. Heterodimer of LeuC and LeuD. The cofactor is [4Fe-4S] cluster.

It catalyses the reaction (2R,3S)-3-isopropylmalate = (2S)-2-isopropylmalate. The protein operates within amino-acid biosynthesis; L-leucine biosynthesis; L-leucine from 3-methyl-2-oxobutanoate: step 2/4. Catalyzes the isomerization between 2-isopropylmalate and 3-isopropylmalate, via the formation of 2-isopropylmaleate. The polypeptide is 3-isopropylmalate dehydratase large subunit (Mycobacterium bovis (strain ATCC BAA-935 / AF2122/97)).